The primary structure comprises 621 residues: Polycystin-2-like protein 2 (621 aa).

Residues 1 to 31 (MSEATWWYRGGTSKHDLHYRREAEVNTTLEE) lie on the Cytoplasmic side of the membrane. The chain crosses the membrane as a helical span at residues 32–52 (LLLYFIFLINLCILTFGMVNP). Residues 53–277 (HMYYLNKVMS…SVKLLRYVSY (225 aa)) lie on the Extracellular side of the membrane. N-linked (GlcNAc...) asparagine glycans are attached at residues Asn-115 and Asn-138. The helical transmembrane segment at 278–298 (YDYFIASCEVIFCIFLFVFII) threads the bilayer. Topologically, residues 299–314 (QELRKVNEFKSAYFRS) are cytoplasmic. A helical transmembrane segment spans residues 315–335 (VWNWLEMLLLLLCFLAVSFYA). The Extracellular portion of the chain corresponds to 336 to 360 (YCNMQSFLLLGQLLKNTDSYPDFYF). The helical transmembrane segment at 361–381 (LAYWHIYYNNVIAITIFFAWI) threads the bilayer. Residues 382-406 (KIFKFISFNETMSQLSSTLSRCMKD) lie on the Cytoplasmic side of the membrane. The chain crosses the membrane as a helical span at residues 407-427 (IVGFAIMFFIIFSAYAQLGFL). Residues 428–468 (VFGSQVDDFSTFQNSIFAQFRIVLGDFNFAGIQQANWILGP) are Extracellular-facing. The chain crosses the membrane as a helical span at residues 469 to 489 (IYFITFIFFVFFVLLNMFLAI). The Cytoplasmic portion of the chain corresponds to 490-621 (INDTYSEVKA…KLNQLMRKLH (132 aa)). A coiled-coil region spans residues 521 to 551 (NVLEKLRLKKAQAKEEKKMQTTDLAQRARRD).

The protein belongs to the polycystin family. In terms of assembly, interacts with TRPC1 and TRPC5. In terms of tissue distribution, expressed only in testis and heart.

The protein resides in the membrane. In terms of biological role, exhibits a lower single conductance but no spontaneous channel activity. May function as a regulator of calcium channels or a channel component involving Ca2(+) homeostasis. The chain is Polycystin-2-like protein 2 from Mus musculus (Mouse).